Consider the following 420-residue polypeptide: MLSSFPVVLLETMSHYTDEPRFTIEQIDLLQRLRRTGMTKHEILHALETLDRLDQEHSDKFGRRSSYGGSSYGNSTNNVPASSSTATASTQTQHSGMSPSPSNSYDTSPQPCTTNQNGRENNERLSTSNGKMSPTRYHANSMGQRSYSFEASEEDLDVDDKVEELMRRDSSVIKEEIKAFLANRRISQAVVAQVTGISQSRISHWLLQQGSDLSEQKKRAFYRWYQLEKTNPGATLSMRPAPIPIEDPEWRQTPPPVSATSGTFRLRRGSRFTWRKECLAVMESYFNENQYPDEAKREEIANACNAVIQKPGKKLSDLERVTSLKVYNWFANRRKEIKRRANIEAAILESHGIDVQSPGGHSNSDDVDGNDYSEQDDSTSHSDHQDPISLAVEMAAVNHTILALARQGANEIKTEALDDD.

The HNF-p1 domain maps to 18 to 49 (DEPRFTIEQIDLLQRLRRTGMTKHEILHALET). Positions 56-139 (EHSDKFGRRS…GKMSPTRYHA (84 aa)) are disordered. K60 participates in a covalent cross-link: Glycyl lysine isopeptide (Lys-Gly) (interchain with G-Cter in SUMO2). Composition is skewed to low complexity over residues 64-73 (RSSYGGSSYG) and 81-93 (ASSSTATASTQTQ). Positions 94 to 132 (HSGMSPSPSNSYDTSPQPCTTNQNGRENNERLSTSNGKM) are enriched in polar residues. K131 is covalently cross-linked (Glycyl lysine isopeptide (Lys-Gly) (interchain with G-Cter in SUMO2)). In terms of domain architecture, POU-specific atypical spans 145 to 241 (RSYSFEASEE…PGATLSMRPA (97 aa)). The residue at position 148 (S148) is a Phosphoserine. A Glycyl lysine isopeptide (Lys-Gly) (interchain with G-Cter in SUMO2) cross-link involves residue K161. S170 bears the Phosphoserine mark. Residues K174, K217, and K310 each participate in a glycyl lysine isopeptide (Lys-Gly) (interchain with G-Cter in SUMO2) cross-link. Positions 267-341 (RRGSRFTWRK…NRRKEIKRRA (75 aa)) form a DNA-binding region, homeobox. Positions 353–385 (IDVQSPGGHSNSDDVDGNDYSEQDDSTSHSDHQ) are disordered. Residues 365-377 (DDVDGNDYSEQDD) show a composition bias toward acidic residues. K413 is covalently cross-linked (Glycyl lysine isopeptide (Lys-Gly) (interchain with G-Cter in SUMO1); alternate). K413 participates in a covalent cross-link: Glycyl lysine isopeptide (Lys-Gly) (interchain with G-Cter in SUMO2); alternate.

Associates with the telomerase holoenzyme complex. Interacts with DKC1, XRCC6 and COIL. As to expression, ubiquitous. Detected in pancreas, brain, spleen, placenta, prostate, thymus, liver, heart, bone marrow, skeletal muscle, stomach, uterus, testis, kidney, ovary, colon, lung, cardiac muscle and thyroid gland.

It is found in the nucleus. It localises to the cytoplasm. The protein resides in the chromosome. Its subcellular location is the telomere. The protein localises to the cajal body. It is found in the PML body. In terms of biological role, binds directly to 5'-TTAGGG-3' repeats in telomeric DNA. Associates with the telomerase complex at sites of active telomere processing and positively regulates telomere elongation. Important for TERT binding to chromatin, indicating a role in recruitment of the telomerase complex to telomeres. Also plays a role in the alternative lengthening of telomeres (ALT) pathway in telomerase-negative cells where it promotes formation and/or maintenance of ALT-associated promyelocytic leukemia bodies (APBs). Enhances formation of telomere C-circles in ALT cells, suggesting a possible role in telomere recombination. Might also be involved in the DNA damage response at telomeres. The protein is Homeobox-containing protein 1 of Homo sapiens (Human).